The following is a 568-amino-acid chain: Oxygen-dependent choline dehydrogenase (568 aa).

An FAD-binding site is contributed by 8 to 37; sequence DYIIIGAGSAGNTLAARLTEDAGVTVLLLE. The active-site Proton acceptor is the His-477.

The protein belongs to the GMC oxidoreductase family. FAD serves as cofactor.

It carries out the reaction choline + A = betaine aldehyde + AH2. It catalyses the reaction betaine aldehyde + NAD(+) + H2O = glycine betaine + NADH + 2 H(+). Its pathway is amine and polyamine biosynthesis; betaine biosynthesis via choline pathway; betaine aldehyde from choline (cytochrome c reductase route): step 1/1. In terms of biological role, involved in the biosynthesis of the osmoprotectant glycine betaine. Catalyzes the oxidation of choline to betaine aldehyde and betaine aldehyde to glycine betaine at the same rate. The chain is Oxygen-dependent choline dehydrogenase from Pseudomonas syringae pv. syringae (strain B728a).